The sequence spans 242 residues: DnaJ homolog subfamily B member 6 (242 aa).

Residues 2–69 (VDYYEVLGVQ…KKRDIYDRYG (68 aa)) form the J domain. An interaction with HSP70 region spans residues 2 to 146 (VDYYEVLGVQ…TGSFFSTFSG (145 aa)). The interaction with KRT18 stretch occupies residues 119–242 (FEDFFGHRRG…KEQLLRLDNK (124 aa)). At arginine 135 the chain carries Omega-N-methylarginine.

Homooligomer. Interacts with BAG3, HSPB8 and STUB1. Interacts with ALKBH1. Interacts with HSP70, KRT18 and PTTG. As to expression, expressed in all tissues examined with highest expression in brain and retina and lower levels observed in testis, spleen, heart, liver and kidney.

It localises to the cytoplasm. Its subcellular location is the perinuclear region. It is found in the nucleus. The protein localises to the myofibril. The protein resides in the sarcomere. It localises to the z line. In terms of biological role, has a stimulatory effect on the ATPase activity of HSP70 in a dose-dependent and time-dependent manner and hence acts as a co-chaperone of HSP70. Plays an indispensable role in the organization of KRT8/KRT18 filaments. Acts as an endogenous molecular chaperone for neuronal proteins including huntingtin. Suppresses aggregation and toxicity of polyglutamine-containing, aggregation-prone proteins. Also reduces cellular toxicity and caspase-3 activity. The polypeptide is DnaJ homolog subfamily B member 6 (DNAJB6) (Bos taurus (Bovine)).